A 373-amino-acid chain; its full sequence is Bilirubin reductase (373 aa).

Position 92 (Q92) interacts with FMN. R168 (proton donor) is an active-site residue. An FMN-binding site is contributed by K215. Residues C344, C347, C351, and C363 each coordinate [4Fe-4S] cluster.

The protein belongs to the NADH:flavin oxidoreductase/NADH oxidase family. The cofactor is FMN. Requires [4Fe-4S] cluster as cofactor.

It carries out the reaction urobilinogen + 4 A = (4Z,15Z)-bilirubin IXalpha + 4 AH2. The enzyme catalyses urobilinogen + 2 A = (4Z,15Z)-mesobilirubin IXalpha + 2 AH2. Its pathway is porphyrin-containing compound metabolism; protoheme degradation. Its function is as follows. Bilirubin reductase that catalyzes reduction of mesobilirubin and/or bilirubin to urobilinogen, a key step during heme degradation. Cooperates with BilS, which is probably involved in electron transfer for BilR. Urobilinogen then spontaneously degrades into urobilin, which gives urine its distinctive yellow color. This Clostridium symbiosum (strain WAL-14163) protein is Bilirubin reductase.